Consider the following 226-residue polypeptide: MAAVLSPITRQVSKEPRELQRVCVDIRLEDVQDCLVYDRRGGSVPFKNLYQHTKSVIIFVRNFLCYACKEYVEDLSKIPEDVFEGKVLGIRLIVIGQSMHHHIEAFCTLTGYPYEIYVDPDRHIYQKLGMKREETFTDSAQPSPHVKSGIFAGQMKSIWRAMTGPIFDFQGDLHQQGGAIIVGPGAQVHFCHFDTNRLDHMPINWLLQLAGVQQTLDFSKPKIMHV.

It belongs to the peroxiredoxin-like PRXL2 family. PRXL2C subfamily.

The chain is Peroxiredoxin-like 2C (prxl2c) from Takifugu rubripes (Japanese pufferfish).